Consider the following 955-residue polypeptide: MFAWWGRTVYRYRFIVIGITVALCLCGGVFGLSLGKHVTQSGFYDDSSQSVKASILGDQVYGRDRSGHIVAIFHAPDGKTVNDPAWAKKITDELNQFQRNNSNKVTGWAGYLRASDTTNTVVQGMATPDKKYTFVSIPLKGDDDDTILNNYKAIAPDLQKLDGGTVQLAGLDPIANALTSTIATDQRRMEVLALPLVAVVLFLVFGGVIAACLPVMVGGLSIAGALGILRFIALFGPVHFFAQPVVSLIGLGIAVDYGLFVVSRFREEIAEGYDTEAAVRRTVMTAGRTVTFSAVLIAASGASLLLLPQGFVKSLTYALIAAVTLAALLSITLLPACLAILAKHVDALGVRTLFRVPLLRNWRMSHACLNWLADRLQKTKTREEVEAGFWGKLVNFVMKRPLVFAIPIVIGMILLVIPLGNLSFGGMSEKYLPPNNAVRQSQEHFDQLFPGYRTNPLTLVIQTSNHQPVTDQEIADIRSKAMAISGFIEPDNNYVNMWQERTVAPGASKDPSVRVLQNGLINPNDASKKINELRSITPPKGLTVSVGGTPALEQDSIHSLVAQAPLMVIMLITTTMLLMFLAFGSFVLPIKAAVMSALTLGSTMGILTWIFVDGHLSKWLNFTPTPLMVVIIALVVAVGYGLATDYEVFLVSRMVEARAESMSTQEAVRIGTASTGRLITAAALVLAVVAGSFVFSDLVMMKYLAFGLMAALLLDATVVRMFLVPSVMKLLGDDCWWAPRWARLLQNRIGLGEIHLPDERRRPTVSGRPVRPPVTAASLAAPASRVPRGPTHPATLEPSQRARSGLASRPQIKRPQELPSGASTARIQMRPSQSVEATTTRLSVPGNAPTTAAVSSSQGVQAVPLAATRHPLPTPSPASGQTRAMPVPANRSSDNASETAEPTTALPIMRPQDNDSEVATEKLNALGQGDNSRQHRRATGGGISAQDLLRREGRL.

The Cytoplasmic segment spans residues 1–13; the sequence is MFAWWGRTVYRYR. A helical transmembrane segment spans residues 14 to 34; sequence FIVIGITVALCLCGGVFGLSL. At 35 to 190 the chain is on the periplasmic side; sequence GKHVTQSGFY…TIATDQRRME (156 aa). 40–44 lines the a 1,2-diacylglycero-3-phosphoethanolamine pocket; it reads QSGFY. Residues 191–213 form a helical membrane-spanning segment; the sequence is VLALPLVAVVLFLVFGGVIAACL. Topologically, residues 214–219 are cytoplasmic; the sequence is PVMVGG. A helical transmembrane segment spans residues 220–236; the sequence is LSIAGALGILRFIALFG. Residues 237–244 lie on the Periplasmic side of the membrane; sequence PVHFFAQP. Residues 245-262 traverse the membrane as a helical segment; the sequence is VVSLIGLGIAVDYGLFVV. Topologically, residues 263-291 are cytoplasmic; the sequence is SRFREEIAEGYDTEAAVRRTVMTAGRTVT. Residues 292 to 312 traverse the membrane as a helical segment; it reads FSAVLIAASGASLLLLPQGFV. Over 313-319 the chain is Periplasmic; sequence KSLTYAL. A helical transmembrane segment spans residues 320-340; sequence IAAVTLAALLSITLLPACLAI. Residues 341-401 lie on the Cytoplasmic side of the membrane; it reads LAKHVDALGV…KLVNFVMKRP (61 aa). The chain crosses the membrane as a helical span at residues 402 to 422; the sequence is LVFAIPIVIGMILLVIPLGNL. Over 423–567 the chain is Periplasmic; it reads SFGGMSEKYL…HSLVAQAPLM (145 aa). A helical membrane pass occupies residues 568 to 588; that stretch reads VIMLITTTMLLMFLAFGSFVL. Topologically, residues 589–591 are cytoplasmic; it reads PIK. Residues 592-612 traverse the membrane as a helical segment; that stretch reads AAVMSALTLGSTMGILTWIFV. The Periplasmic portion of the chain corresponds to 613-621; the sequence is DGHLSKWLN. A helical membrane pass occupies residues 622–642; that stretch reads FTPTPLMVVIIALVVAVGYGL. The Cytoplasmic segment spans residues 643–678; sequence ATDYEVFLVSRMVEARAESMSTQEAVRIGTASTGRL. A helical membrane pass occupies residues 679-699; the sequence is ITAAALVLAVVAGSFVFSDLV. Residues 700 to 703 are Periplasmic-facing; sequence MMKY. A helical transmembrane segment spans residues 704–724; sequence LAFGLMAALLLDATVVRMFLV. The Cytoplasmic portion of the chain corresponds to 725 to 955; it reads PSVMKLLGDD…QDLLRREGRL (231 aa). The disordered stretch occupies residues 759–955; it reads ERRRPTVSGR…QDLLRREGRL (197 aa). Polar residues-rich tracts occupy residues 821–860 and 890–902; these read GASTARIQMRPSQSVEATTTRLSVPGNAPTTAAVSSSQGV and NRSSDNASETAEP.

The protein belongs to the resistance-nodulation-cell division (RND) (TC 2.A.6) family. MmpL subfamily.

The protein resides in the cell inner membrane. It localises to the cell septum. It is found in the cell tip. Functionally, transports trehalose monomycolate (TMM) to the cell wall. Flips TMM across the inner membrane. Membrane potential is not required for this function. Transports probably phosphatidylethanolamine (PE) as well. Contributes to membrane potential, cell wall composition, antibiotic susceptibility and fitness. The chain is Probable trehalose monomycolate exporter MmpL3 (mmpL3) from Mycobacterium leprae (strain TN).